Reading from the N-terminus, the 288-residue chain is 4-diphosphocytidyl-2-C-methyl-D-erythritol kinase (288 aa).

The active site involves Lys-22. Pro-104–Ser-114 lines the ATP pocket. Residue Asp-146 is part of the active site.

This sequence belongs to the GHMP kinase family. IspE subfamily.

It catalyses the reaction 4-CDP-2-C-methyl-D-erythritol + ATP = 4-CDP-2-C-methyl-D-erythritol 2-phosphate + ADP + H(+). Its pathway is isoprenoid biosynthesis; isopentenyl diphosphate biosynthesis via DXP pathway; isopentenyl diphosphate from 1-deoxy-D-xylulose 5-phosphate: step 3/6. In terms of biological role, catalyzes the phosphorylation of the position 2 hydroxy group of 4-diphosphocytidyl-2C-methyl-D-erythritol. This chain is 4-diphosphocytidyl-2-C-methyl-D-erythritol kinase, found in Protochlamydia amoebophila (strain UWE25).